An 88-amino-acid polypeptide reads, in one-letter code: Small integral membrane protein 13 (88 aa).

Residues 10–30 (LVFVATLLIVLLLMVCGWYFV) traverse the membrane as a helical segment. Positions 48 to 60 (TGSQEGDNEQPSG) are enriched in polar residues. The segment at 48–88 (TGSQEGDNEQPSGSEAEEDPSASPHKMRSARQRRPPVDDGH) is disordered. A phosphoserine mark is found at Ser59, Ser61, and Ser70. The segment covering 72–81 (HKMRSARQRR) has biased composition (basic residues).

It belongs to the SMIM13 family.

It is found in the membrane. This Rattus norvegicus (Rat) protein is Small integral membrane protein 13 (Smim13).